Here is a 78-residue protein sequence, read N- to C-terminus: Large ribosomal subunit protein uL29 (78 aa).

It belongs to the universal ribosomal protein uL29 family.

This Rhodococcus erythropolis (strain PR4 / NBRC 100887) protein is Large ribosomal subunit protein uL29.